Reading from the N-terminus, the 426-residue chain is Histidine--tRNA ligase (426 aa).

This sequence belongs to the class-II aminoacyl-tRNA synthetase family.

It is found in the cytoplasm. It catalyses the reaction tRNA(His) + L-histidine + ATP = L-histidyl-tRNA(His) + AMP + diphosphate + H(+). This is Histidine--tRNA ligase from Saccharolobus shibatae (strain ATCC 51178 / DSM 5389 / JCM 8931 / NBRC 15437 / B12) (Sulfolobus shibatae).